Reading from the N-terminus, the 132-residue chain is ATP synthase epsilon chain (132 aa).

This sequence belongs to the ATPase epsilon chain family. In terms of assembly, F-type ATPases have 2 components, CF(1) - the catalytic core - and CF(0) - the membrane proton channel. CF(1) has five subunits: alpha(3), beta(3), gamma(1), delta(1), epsilon(1). CF(0) has three main subunits: a, b and c.

The protein localises to the cell inner membrane. Its function is as follows. Produces ATP from ADP in the presence of a proton gradient across the membrane. The protein is ATP synthase epsilon chain of Jannaschia sp. (strain CCS1).